A 274-amino-acid polypeptide reads, in one-letter code: MKKLLAGFLTLSLALAACSNGSDDDSSKKDDSSKDNQSSDDKSKDSKNDDKKNNDSDKDKDNNSDSDKNSDSKSDDSSSSDRNNGDDENSSDNASGSDSSSSNNDSNANSDGSSSNADGDNASGNNDNANNATSSESNGNENGAMNDANGSNSNDNASADANNGASSANTSQYVAPYQGQNAVPVAQNITSGTPDSQAALQNLPNFQNALDNATTEVNGLNGQSNPYNDYAIEGSEGNYSYIFSFQNQAQPGTYTIATVDQQGTVRVVDPAYQQ.

Positions Met-1–Ala-17 are cleaved as a signal peptide. Residue Cys-18 is the site of N-palmitoyl cysteine attachment. Cys-18 is lipidated: S-diacylglycerol cysteine. Positions Cys-18 to Asn-169 are disordered. A compositionally biased stretch (basic and acidic residues) spans Asp-25–Asp-76. Over residues Ser-91–Asn-169 the composition is skewed to low complexity.

The protein resides in the cell membrane. This is an uncharacterized protein from Staphylococcus saprophyticus subsp. saprophyticus (strain ATCC 15305 / DSM 20229 / NCIMB 8711 / NCTC 7292 / S-41).